Here is a 409-residue protein sequence, read N- to C-terminus: Broad specificity amino-acid racemase (409 aa).

Positions 1–23 (MPFSRTLLALSLGMALLQNPAFA) are cleaved as a signal peptide. Residues cysteine 70 and cysteine 96 are joined by a disulfide bond. Lysine 74 acts as the Proton acceptor in catalysis. Lysine 74 bears the N6-(pyridoxal phosphate)lysine mark. Position 173 (arginine 173) interacts with substrate. Tyrosine 300 functions as the Proton acceptor in the catalytic mechanism. Methionine 348 provides a ligand contact to substrate.

It belongs to the alanine racemase family. Bsr subfamily. In terms of assembly, homodimer. The cofactor is pyridoxal 5'-phosphate.

It is found in the periplasm. It catalyses the reaction an L-alpha-amino acid = a D-alpha-amino acid. The enzyme catalyses L-lysine = D-lysine. It carries out the reaction L-arginine = D-arginine. The catalysed reaction is L-ornithine = D-ornithine. It catalyses the reaction L-alanine = D-alanine. The enzyme catalyses L-methionine = D-methionine. In terms of biological role, amino-acid racemase able to utilize a broad range of substrates. Is mostly active with lysine and arginine and, to a lesser extent, with ornithine, whereas is about 10 times less active with alanine, methionine and ethionine. With phenylalanine as substrate only a trace activity is detectable, and is inactive with glutamate. Plays a key role in the catabolism of D-arginine and D-lysine, that allows P.taetrolens strain NBRC 3460 to grow on these basic D-amino acids as a sole carbon source. This chain is Broad specificity amino-acid racemase, found in Pseudomonas taetrolens.